Reading from the N-terminus, the 282-residue chain is Probable endonuclease 4 (282 aa).

The Zn(2+) site is built by His69, His109, Glu145, Asp179, His182, His216, Asp229, His231, and Glu261.

It belongs to the AP endonuclease 2 family. Requires Zn(2+) as cofactor.

The catalysed reaction is Endonucleolytic cleavage to 5'-phosphooligonucleotide end-products.. Endonuclease IV plays a role in DNA repair. It cleaves phosphodiester bonds at apurinic or apyrimidinic (AP) sites, generating a 3'-hydroxyl group and a 5'-terminal sugar phosphate. The polypeptide is Probable endonuclease 4 (Campylobacter fetus subsp. fetus (strain 82-40)).